The following is a 270-amino-acid chain: Proteasome subunit beta (270 aa).

Residues 1-47 constitute a propeptide, removed in mature form; by autocatalysis; it reads MSNRGRLGDAFLRPGSSSFLDFLSDHAPELLPGRSAAAGNAPLAPHA. T48 functions as the Nucleophile in the catalytic mechanism.

It belongs to the peptidase T1B family. As to quaternary structure, the 20S proteasome core is composed of 14 alpha and 14 beta subunits that assemble into four stacked heptameric rings, resulting in a barrel-shaped structure. The two inner rings, each composed of seven catalytic beta subunits, are sandwiched by two outer rings, each composed of seven alpha subunits. The catalytic chamber with the active sites is on the inside of the barrel. Has a gated structure, the ends of the cylinder being occluded by the N-termini of the alpha-subunits. Is capped by the proteasome-associated ATPase, ARC.

It is found in the cytoplasm. The catalysed reaction is Cleavage of peptide bonds with very broad specificity.. The protein operates within protein degradation; proteasomal Pup-dependent pathway. With respect to regulation, the formation of the proteasomal ATPase ARC-20S proteasome complex, likely via the docking of the C-termini of ARC into the intersubunit pockets in the alpha-rings, may trigger opening of the gate for substrate entry. Interconversion between the open-gate and close-gate conformations leads to a dynamic regulation of the 20S proteasome proteolysis activity. Functionally, component of the proteasome core, a large protease complex with broad specificity involved in protein degradation. The chain is Proteasome subunit beta from Xylanimonas cellulosilytica (strain DSM 15894 / JCM 12276 / CECT 5975 / KCTC 9989 / LMG 20990 / NBRC 107835 / XIL07).